The following is a 43-amino-acid chain: Protein PsbN (43 aa).

The chain crosses the membrane as a helical span at residues 7–27 (LIIFIASLLLGLTGYSIYTAF).

Belongs to the PsbN family.

The protein resides in the plastid. It localises to the chloroplast thylakoid membrane. May play a role in photosystem I and II biogenesis. This is Protein PsbN from Guillardia theta (Cryptophyte).